The sequence spans 539 residues: Glucans biosynthesis protein D (539 aa).

The tat-type signal signal peptide spans 1-29 (MNRRNLLKASMALAAYGSVSASGLFAARA).

It belongs to the OpgD/OpgG family. Post-translationally, predicted to be exported by the Tat system. The position of the signal peptide cleavage has not been experimentally proven.

The protein localises to the periplasm. It functions in the pathway glycan metabolism; osmoregulated periplasmic glucan (OPG) biosynthesis. Its function is as follows. Probably involved in the control of the structural glucose backbone of osmoregulated periplasmic glucans (OPGs). The chain is Glucans biosynthesis protein D from Pseudomonas syringae pv. syringae (strain B728a).